Here is a 198-residue protein sequence, read N- to C-terminus: Na(+)-translocating NADH-quinone reductase subunit E (198 aa).

Transmembrane regions (helical) follow at residues 11–31 (AVFV…FLAV), 35–55 (VSTA…AVPI), 77–97 (FLNF…LEMI), 110–130 (GIFL…SFMV), 140–160 (IVYG…MAGI), and 176–196 (LGIT…FSGV).

Belongs to the NqrDE/RnfAE family. In terms of assembly, composed of six subunits; NqrA, NqrB, NqrC, NqrD, NqrE and NqrF.

It is found in the cell inner membrane. It catalyses the reaction a ubiquinone + n Na(+)(in) + NADH + H(+) = a ubiquinol + n Na(+)(out) + NAD(+). In terms of biological role, NQR complex catalyzes the reduction of ubiquinone-1 to ubiquinol by two successive reactions, coupled with the transport of Na(+) ions from the cytoplasm to the periplasm. NqrA to NqrE are probably involved in the second step, the conversion of ubisemiquinone to ubiquinol. This is Na(+)-translocating NADH-quinone reductase subunit E from Klebsiella pneumoniae subsp. pneumoniae (strain ATCC 700721 / MGH 78578).